A 467-amino-acid polypeptide reads, in one-letter code: Pentatricopeptide repeat-containing protein At1g77170, mitochondrial (467 aa).

A mitochondrion-targeting transit peptide spans 1–30; sequence MFFSGLISKLHVHGTKRTNHFTIFHRLNHF. 9 PPR repeats span residues 81-115, 116-150, 151-181, 182-216, 217-251, 254-284, 285-319, 320-350, and 356-386; these read IAFL…TVLP, DRYS…GFVG, DEFC…NPER, KLGS…GLEP, DDFT…KTEE, DIMM…MRQR, NVVS…GVRP, NKIT…MKSE, and GLSH…MPMK. The tract at residues 391-466 is type E motif; sequence VWGCLMGGCE…IPAYSYASTT (76 aa).

This sequence belongs to the PPR family. PCMP-E subfamily.

The protein resides in the mitochondrion. In Arabidopsis thaliana (Mouse-ear cress), this protein is Pentatricopeptide repeat-containing protein At1g77170, mitochondrial (PCMP-E21).